Consider the following 562-residue polypeptide: Adenylate kinase isoenzyme 5 (562 aa).

Adenylate kinase stretches follow at residues 133–316 (KIIL…MAVD) and 377–559 (KIIF…TAID). Residue 142–147 (GSGKGT) participates in ATP binding. Positions 162 to 193 (SVGELLRKKIHSTSSNRKWSLIAKIITTGELA) are NMP 1. AMP-binding positions include R168, 191-193 (ELA), 219-222 (GFPR), and Q226. Residues 256–266 (KRAEQQGRPDD) form an LID 1 region. Position 257 (R257) interacts with ATP. AMP contacts are provided by R263 and R274. 386 to 391 (GSGKGT) is a binding site for ATP. The tract at residues 406 to 435 (STDELLQNELSSESGRSKLIRDIMERGELV) is NMP 2. AMP contacts are provided by residues T407, 433–435 (ELV), 462–465 (GYPR), and Q469. Residues 499 to 509 (QRSRNSPQADD) form an LID 2 region. R500 contributes to the ATP binding site. R517 contributes to the AMP binding site. G545 is an ATP binding site.

Belongs to the adenylate kinase family. As to quaternary structure, monomer.

The protein resides in the cytoplasm. The catalysed reaction is AMP + ATP = 2 ADP. It catalyses the reaction a 2'-deoxyribonucleoside 5'-diphosphate + ATP = a 2'-deoxyribonucleoside 5'-triphosphate + ADP. It carries out the reaction a ribonucleoside 5'-diphosphate + ATP = a ribonucleoside 5'-triphosphate + ADP. Nucleoside monophosphate (NMP) kinase that catalyzes the reversible transfer of the terminal phosphate group between nucleoside triphosphates and monophosphates. Active on AMP and dAMP with ATP as a donor. When GTP is used as phosphate donor, the enzyme phosphorylates AMP, CMP, and to a small extent dCMP. Also displays broad nucleoside diphosphate kinase activity. The chain is Adenylate kinase isoenzyme 5 (Ak5) from Bos taurus (Bovine).